Here is a 415-residue protein sequence, read N- to C-terminus: Gamma-glutamyl phosphate reductase (415 aa).

It belongs to the gamma-glutamyl phosphate reductase family.

The protein resides in the cytoplasm. The enzyme catalyses L-glutamate 5-semialdehyde + phosphate + NADP(+) = L-glutamyl 5-phosphate + NADPH + H(+). Its pathway is amino-acid biosynthesis; L-proline biosynthesis; L-glutamate 5-semialdehyde from L-glutamate: step 2/2. Catalyzes the NADPH-dependent reduction of L-glutamate 5-phosphate into L-glutamate 5-semialdehyde and phosphate. The product spontaneously undergoes cyclization to form 1-pyrroline-5-carboxylate. This is Gamma-glutamyl phosphate reductase from Leuconostoc citreum (strain KM20).